The following is a 2159-amino-acid chain: Calpain-type cysteine protease DEK1 (2159 aa).

The signal sequence occupies residues 1-33 (MEGEGHHGVVLACSICGFLFAVLSPFSFWVLWA). The Extracellular segment spans residues 34–70 (VNWRPWRLYSWIYARKWPTYVQGPQLSTLCSLLTLCA). The chain crosses the membrane as a helical span at residues 71-91 (WLVVISPIAVLLVWGSVLIAL). Residues 92-95 (MERN) lie on the Cytoplasmic side of the membrane. A helical membrane pass occupies residues 96–116 (IIGLAVIMAGVALLLSFYSIM). At 117-127 (LWWRTQWQSSE) the chain is on the extracellular side. A helical membrane pass occupies residues 128–148 (AVAYLLLLAVCLLCAYDFCAI). Topologically, residues 149 to 164 (YVTAGASASELNSPSG) are cytoplasmic. Residues 165–185 (FFFGVSVISLAINMLFICKIL) form a helical membrane-spanning segment. The Extracellular portion of the chain corresponds to 186–236 (FNVSGFDVDEYVRRSYKFAYSDCVEVAPVSCSPEPPDPSELYMTKSSRVKH). The helical transmembrane segment at 237–257 (LGLLYISSLLVLVGYSILYGL) threads the bilayer. Topologically, residues 258–264 (TSKEARW) are cytoplasmic. The helical transmembrane segment at 265 to 285 (LGALTSVAVVILDWNLGLCSF) threads the bilayer. Topologically, residues 286-294 (RFELLKSRM) are extracellular. Residues 295-315 (IVLFVAGTSRAFLVSFGVHYW) traverse the membrane as a helical segment. Residues 316–320 (YLGHC) lie on the Cytoplasmic side of the membrane. Residues 321-341 (ISYAFVASVLLSAAVSSWLSI) traverse the membrane as a helical segment. Over 342–623 (SNPSVARIDA…LIFHHLAGSP (282 aa)) the chain is Extracellular. Residues 365–409 (RKGQNSSSNSSEGCGSSVKRSSGSVEAGQNGNAMDSMYRSNSQSD) are disordered. Residues 369 to 381 (NSSSNSSEGCGSS) are compositionally biased toward low complexity. The segment covering 382 to 409 (VKRSSGSVEAGQNGNAMDSMYRSNSQSD) has biased composition (polar residues). A helical transmembrane segment spans residues 624–644 (IRAFIVFTVMFIIETATVAIY). The Cytoplasmic portion of the chain corresponds to 645-660 (RPETIKVINATHEQFE). Residues 661–681 (FGFSILLLSPVVCSIMAFIWS) traverse the membrane as a helical segment. Residues 682-694 (LRAEEMLMTSKPQ) lie on the Extracellular side of the membrane. The helical transmembrane segment at 695–715 (KYGFIAWLLSTCVGLFLSFLS) threads the bilayer. Residues 716–719 (KSSV) are Cytoplasmic-facing. The chain crosses the membrane as a helical span at residues 720 to 740 (ILGLSLTVPLMVACLSFAVPI). The Extracellular portion of the chain corresponds to 741 to 770 (WIRNGYSFWIPGREFANRENVSQAPGEKER). The helical transmembrane segment at 771 to 791 (ALFVITIAVFTASIIGLGAIV) threads the bilayer. Topologically, residues 792 to 822 (SAKPLDALGYKGWDADKNSSYSPYATSMYLG) are cytoplasmic. The chain crosses the membrane as a helical span at residues 823–843 (WALSSTIAVITTGLIPIVAWF). The Extracellular segment spans residues 844–853 (ATYRFSPSSA). A helical membrane pass occupies residues 854-874 (ICVGLFATVLVSFCGASYWGV). The Cytoplasmic portion of the chain corresponds to 875–887 (VNSREDGVPLKAD). The chain crosses the membrane as a helical span at residues 888 to 908 (FLAALLPLLCIPAFFSLFTGL). The Extracellular portion of the chain corresponds to 909-921 (YKWKDDDWKISRG). The chain crosses the membrane as a helical span at residues 922 to 942 (VYLFVGMGMLLLFGAVAAVIV). Residues 943-946 (TIRP) lie on the Cytoplasmic side of the membrane. Residues 947–967 (WTVGVACLVAILFLVFVIGVI) form a helical membrane-spanning segment. Topologically, residues 968 to 981 (HYWTSNNFYLTRTQ) are extracellular. A helical membrane pass occupies residues 982–1002 (MLLVCSIAFLLALAAFLMGLF). At 1003–1016 (HGKPFVGASIGYFS) the chain is on the cytoplasmic side. Residues 1017-1037 (FIFLLTGRALTVLLSPPIVVY) traverse the membrane as a helical segment. The Extracellular segment spans residues 1038–1060 (SPRVLPVYVYDAHADSAKNVSYA). The chain crosses the membrane as a helical span at residues 1061 to 1081 (FLILYGIALATEVWGVIASLI). Residues 1082–2159 (MNPPFVGAGV…SKASIRLEAV (1078 aa)) lie on the Cytoplasmic side of the membrane. Phosphoserine occurs at positions 1371 and 1376. Residues 1417-1609 (TGRHCGELDL…MSPAEYGFFD (193 aa)) enclose the Calpain catalytic 1 domain. The residue at position 1665 (Ser-1665) is a Phosphoserine. Positions 1703-2005 (NFTDQEFPPE…FRSIYVCRVY (303 aa)) constitute a Calpain catalytic 2 domain. Active-site residues include Cys-1769, His-1927, and Asn-1947.

The protein belongs to the peptidase C2 family. In terms of processing, autocatalytic proteolytic cleavage leading to the production of mainly cytoplasmic localized subproducts of about 85 and 120 kDa. In terms of tissue distribution, expressed in most tissues at low levels ranging from 30 to 55 ppm. Present in all endosperm cells at transcript level, but confined to aleurones at protein level.

It is found in the endoplasmic reticulum membrane. Its subcellular location is the cytoplasm. The protein localises to the cell membrane. It localises to the endosome membrane. In terms of biological role, essential protease involved in epiderm development. Required for aleurone cell development in the endosperm probably by maintaining and restricting the aleurone and embryonic epidermal L1 cell-layer fates as well as meristems organization. Involved in the maintenance of adaxial/abaxial axis information in developing leaves, probably by regulating cell proliferation and expansion. Does not need calcium ions to be active. In Zea mays (Maize), this protein is Calpain-type cysteine protease DEK1 (DEK1).